The sequence spans 308 residues: D-alanine--D-alanine ligase (308 aa).

The region spanning 109–302 (KAAYAAAGLP…FGALCRWIVE (194 aa)) is the ATP-grasp domain. 136-186 (MPPPYVIKPYNEGSSVGVYLVPEGAEAAPELADDLPDTLMVEAFVPGRELT) serves as a coordination point for ATP. Asp253, Glu269, and Asn271 together coordinate Mg(2+).

This sequence belongs to the D-alanine--D-alanine ligase family. It depends on Mg(2+) as a cofactor. Mn(2+) is required as a cofactor.

It is found in the cytoplasm. The catalysed reaction is 2 D-alanine + ATP = D-alanyl-D-alanine + ADP + phosphate + H(+). It participates in cell wall biogenesis; peptidoglycan biosynthesis. In terms of biological role, cell wall formation. The sequence is that of D-alanine--D-alanine ligase from Dinoroseobacter shibae (strain DSM 16493 / NCIMB 14021 / DFL 12).